The primary structure comprises 303 residues: Ubiquinone biosynthesis protein COQ4, mitochondrial (303 aa).

Positions 191, 192, 195, and 207 each coordinate Zn(2+).

Belongs to the COQ4 family. Component of a multi-subunit COQ enzyme complex, composed of at least COQ3, COQ4, COQ5, COQ6, COQ7 and COQ9. Zn(2+) serves as cofactor.

It localises to the mitochondrion inner membrane. It catalyses the reaction a 4-hydroxy-3-methoxy-5-(all-trans-polyprenyl)benzoate + H(+) = a 2-methoxy-6-(all-trans-polyprenyl)phenol + CO2. Its pathway is cofactor biosynthesis; ubiquinone biosynthesis. Lyase that catalyzes the C1-decarboxylation of 4-hydroxy-3-methoxy-5-(all-trans-polyprenyl)benzoic acid into 2-methoxy-6-(all-trans-polyprenyl)phenol during ubiquinone biosynthesis. The chain is Ubiquinone biosynthesis protein COQ4, mitochondrial from Komagataella phaffii (strain GS115 / ATCC 20864) (Yeast).